A 605-amino-acid polypeptide reads, in one-letter code: UvrABC system protein C (605 aa).

Residues Q14–I92 enclose the GIY-YIG domain. The region spanning K202–I237 is the UVR domain.

It belongs to the UvrC family. Interacts with UvrB in an incision complex.

It is found in the cytoplasm. Functionally, the UvrABC repair system catalyzes the recognition and processing of DNA lesions. UvrC both incises the 5' and 3' sides of the lesion. The N-terminal half is responsible for the 3' incision and the C-terminal half is responsible for the 5' incision. This Wolbachia sp. subsp. Drosophila simulans (strain wRi) protein is UvrABC system protein C.